We begin with the raw amino-acid sequence, 181 residues long: Monofunctional chorismate mutase (181 aa).

Residues 1-20 form the signal peptide; sequence MIRHIAIFLCSLLMCSTTFA. The region spanning 21 to 102 is the Chorismate mutase domain; that stretch reads DSVTSVSLGA…ASKAIQYRYL (82 aa). 5 residues coordinate substrate: Arg-38, Lys-49, Asp-58, Glu-62, and Gln-98.

Its subcellular location is the periplasm. It carries out the reaction chorismate = prephenate. It participates in metabolic intermediate biosynthesis; prephenate biosynthesis; prephenate from chorismate: step 1/1. Its function is as follows. Catalyzes the Claisen rearrangement of chorismate to prephenate. The sequence is that of Monofunctional chorismate mutase from Salmonella typhimurium.